Reading from the N-terminus, the 292-residue chain is ATP synthase gamma chain (292 aa).

Belongs to the ATPase gamma chain family. F-type ATPases have 2 components, CF(1) - the catalytic core - and CF(0) - the membrane proton channel. CF(1) has five subunits: alpha(3), beta(3), gamma(1), delta(1), epsilon(1). CF(0) has three main subunits: a, b and c.

The protein resides in the cell membrane. Produces ATP from ADP in the presence of a proton gradient across the membrane. The gamma chain is believed to be important in regulating ATPase activity and the flow of protons through the CF(0) complex. The protein is ATP synthase gamma chain of Streptococcus thermophilus (strain CNRZ 1066).